The chain runs to 560 residues: Nibrin homolog (560 aa).

The FHA domain maps to 25–87 (YKVGRKDCDV…YGTFFNKVQG (63 aa)). One can recognise a BRCT domain in the interval 115-190 (TFRLSFVPIV…KQIVLGDWFK (76 aa)). Positions 511–518 (YKRGTVID) match the Nuclear localization signal motif.

The protein belongs to the Nibrin family. Component of the MRN complex composed of two heterodimers RAD50 and MRE11 associated with a single NBS1.

It localises to the nucleus. The protein resides in the chromosome. In terms of biological role, component of the MRN complex, which plays a central role in double-strand break (DSB) repair, DNA recombination, maintenance of telomere integrity and meiosis. The MRN complex is involved in the repair of DNA double-strand breaks (DSBs) via homologous recombination (HR), an error-free mechanism which primarily occurs during S and G2 phases. The complex (1) mediates the end resection of damaged DNA, which generates proper single-stranded DNA, a key initial steps in HR, and is (2) required for the recruitment of other repair factors and efficient activation of ATM and ATR upon DNA damage. The MRN complex possesses single-strand endonuclease activity and double-strand-specific 3'-5' exonuclease activity, which are provided by MRE11, to initiate end resection, which is required for single-strand invasion and recombination. Within the MRN complex, NBS1 acts as a protein-protein adapter, which specifically recognizes and binds phosphorylated proteins, promoting their recruitment to DNA damage sites. Recruits MRE11 and RAD50 components of the MRN complex to DSBs in response to DNA damage. In Oryza sativa subsp. indica (Rice), this protein is Nibrin homolog.